Here is a 526-residue protein sequence, read N- to C-terminus: Bifunctional purine biosynthesis protein PurH (526 aa).

The MGS-like domain maps to M1–T147.

Belongs to the PurH family.

The enzyme catalyses (6R)-10-formyltetrahydrofolate + 5-amino-1-(5-phospho-beta-D-ribosyl)imidazole-4-carboxamide = 5-formamido-1-(5-phospho-D-ribosyl)imidazole-4-carboxamide + (6S)-5,6,7,8-tetrahydrofolate. It catalyses the reaction IMP + H2O = 5-formamido-1-(5-phospho-D-ribosyl)imidazole-4-carboxamide. Its pathway is purine metabolism; IMP biosynthesis via de novo pathway; 5-formamido-1-(5-phospho-D-ribosyl)imidazole-4-carboxamide from 5-amino-1-(5-phospho-D-ribosyl)imidazole-4-carboxamide (10-formyl THF route): step 1/1. It functions in the pathway purine metabolism; IMP biosynthesis via de novo pathway; IMP from 5-formamido-1-(5-phospho-D-ribosyl)imidazole-4-carboxamide: step 1/1. The polypeptide is Bifunctional purine biosynthesis protein PurH (Neisseria gonorrhoeae (strain NCCP11945)).